A 318-amino-acid chain; its full sequence is Ribosomal RNA small subunit methyltransferase H (318 aa).

Residues Gly-34–His-36, Asp-57, Leu-91, Asp-110, and Gln-117 each bind S-adenosyl-L-methionine.

Belongs to the methyltransferase superfamily. RsmH family.

The protein localises to the cytoplasm. The enzyme catalyses cytidine(1402) in 16S rRNA + S-adenosyl-L-methionine = N(4)-methylcytidine(1402) in 16S rRNA + S-adenosyl-L-homocysteine + H(+). Specifically methylates the N4 position of cytidine in position 1402 (C1402) of 16S rRNA. This is Ribosomal RNA small subunit methyltransferase H from Chlorobaculum parvum (strain DSM 263 / NCIMB 8327) (Chlorobium vibrioforme subsp. thiosulfatophilum).